Here is a 153-residue protein sequence, read N- to C-terminus: MSSKIILLILMFLSFISKNKSLGIATIVMLFISFFNTEKCITFMENHFMNLGMTFLMIWMLIPIIKNPEFTENIKNAFNLKGIVCFLCGAIVAVLASKGVGFLKGSTDTLTGIILGSIVGVSLLGGVPVGPLIASGIAYEVVFIINLIFKNNC.

The next 4 membrane-spanning stretches (helical) occupy residues I5 to A25, E45 to I65, I83 to L103, and I113 to I133.

It belongs to the UPF0756 family.

It localises to the cell membrane. The polypeptide is UPF0756 membrane protein NT01CX_1209 (Clostridium novyi (strain NT)).